We begin with the raw amino-acid sequence, 128 residues long: Otoraplin (128 aa).

The N-terminal stretch at 1–18 (MARILILLLGGLVVLCAG) is a signal peptide. Disulfide bonds link Cys32-Cys37 and Cys55-Cys127. The SH3 domain maps to 39–110 (YTISLARAQE…PSNLVKEQRV (72 aa)).

It belongs to the MIA/OTOR family. Highly expressed in cochlea.

It localises to the secreted. The sequence is that of Otoraplin (Otor) from Mus musculus (Mouse).